The chain runs to 668 residues: Methionine--tRNA ligase (668 aa).

The 'HIGH' region signature appears at 11-21 (AYTNGPLHIGH). Zn(2+) contacts are provided by Cys146, Cys149, Cys159, and Cys162. Positions 332 to 336 (KMSTS) match the 'KMSKS' region motif. Thr335 provides a ligand contact to ATP. A tRNA-binding domain is found at 567–668 (EFNRLDLRVG…REVEPGERIR (102 aa)).

It belongs to the class-I aminoacyl-tRNA synthetase family. MetG type 1 subfamily. As to quaternary structure, homodimer. It depends on Zn(2+) as a cofactor.

It is found in the cytoplasm. The catalysed reaction is tRNA(Met) + L-methionine + ATP = L-methionyl-tRNA(Met) + AMP + diphosphate. Its function is as follows. Is required not only for elongation of protein synthesis but also for the initiation of all mRNA translation through initiator tRNA(fMet) aminoacylation. This Methanopyrus kandleri (strain AV19 / DSM 6324 / JCM 9639 / NBRC 100938) protein is Methionine--tRNA ligase.